A 164-amino-acid chain; its full sequence is Thiol peroxidase (164 aa).

The 146-residue stretch at 18 to 163 (VNEGDIAPNF…FEAALKAYRN (146 aa)) folds into the Thioredoxin domain. Cys60 serves as the catalytic Cysteine sulfenic acid (-SOH) intermediate. A disulfide bond links Cys60 and Cys93.

This sequence belongs to the peroxiredoxin family. Tpx subfamily. Homodimer.

It catalyses the reaction a hydroperoxide + [thioredoxin]-dithiol = an alcohol + [thioredoxin]-disulfide + H2O. Functionally, thiol-specific peroxidase that catalyzes the reduction of hydrogen peroxide and organic hydroperoxides to water and alcohols, respectively. Plays a role in cell protection against oxidative stress by detoxifying peroxides. The protein is Thiol peroxidase of Staphylococcus epidermidis (strain ATCC 35984 / DSM 28319 / BCRC 17069 / CCUG 31568 / BM 3577 / RP62A).